Reading from the N-terminus, the 336-residue chain is D-alanine--D-alanine ligase (336 aa).

The region spanning 124-330 is the ATP-grasp domain; the sequence is KMWFSALGIP…FATFLEQAIL (207 aa). 154-209 provides a ligand contact to ATP; that stretch reads AFDEWGSVFIKAASQGSSVGCFPAHRREDIPGLVRKAFEYAPFVVVEKTIKARELE. Mg(2+)-binding residues include Asp-284, Glu-297, and Asn-299.

It belongs to the D-alanine--D-alanine ligase family. Requires Mg(2+) as cofactor. Mn(2+) is required as a cofactor.

The protein resides in the cytoplasm. It carries out the reaction 2 D-alanine + ATP = D-alanyl-D-alanine + ADP + phosphate + H(+). It participates in cell wall biogenesis; peptidoglycan biosynthesis. Cell wall formation. The protein is D-alanine--D-alanine ligase of Shewanella amazonensis (strain ATCC BAA-1098 / SB2B).